A 931-amino-acid polypeptide reads, in one-letter code: Elicitor of plant defense protein 1 (931 aa).

The segment at 13–32 is disordered; sequence NYNSVIPPPEPLNTDPDMHP. One can recognise a uDENN domain in the interval 19–277; the sequence is PPPEPLNTDP…NLCTEAFNPL (259 aa). Residues 301–433 enclose the cDENN domain; it reads EIPGSRSIDL…ARRKLMSLLQ (133 aa). The 365-residue stretch at 435–799 folds into the dDENN domain; sequence AAPHKLRYGV…DREMQPANNA (365 aa). Disordered regions lie at residues 478-552 and 566-586; these read LGKW…SRSD and SGHF…DKHP. Residues 521–537 show a composition bias toward polar residues; that stretch reads TSKSGKTSPQSSVSPVS. Residues 566–575 show a composition bias toward basic and acidic residues; sequence SGHFGEEKMR. The segment at 666-714 adopts a Phorbol-ester/DAG-type zinc-finger fold; sequence GHCFNWIPKDNTSICNICNDHAEGDGIYKCTGCKIFSHGRCLGHASLVC.

Belongs to the EPD1 elicitor family.

The protein resides in the secreted. It is found in the host cell. In terms of biological role, acts as an elicitor that triggers cell death and defense responses in the host plants. This Fusarium odoratissimum (strain NRRL 54006) protein is Elicitor of plant defense protein 1.